The primary structure comprises 1113 residues: Cytospin-A (1113 aa).

The segment at 1–160 (MKKSVRPAAS…KSKSDGQISD (160 aa)) is disordered. The segment covering 59–103 (ASCNAVSKSKRTTSVGTTASTLDSKPKTASGTTSKRLASSLSKET) has biased composition (polar residues). A compositionally biased stretch (basic and acidic residues) spans 145–154 (SEGRMSKSKS). Residues 220–259 (AADVESTLILLQEQNQAIREELNLLKSENRMLKDRLNALG) are a coiled coil. Positions 284-374 (AGSGQSDGGG…RRGSSGNASE (91 aa)) are disordered. A compositionally biased stretch (low complexity) spans 338–358 (SSDDALDAPSGASSSSESECA). 2 coiled-coil regions span residues 379–433 (CLTE…MDSL) and 473–791 (MELE…RGRV). Disordered regions lie at residues 766 to 785 (QEKN…RKQD), 832 to 902 (FDSA…PTYP), 914 to 957 (GSAA…DGAS), and 972 to 997 (ALAS…RKDP). The span at 834-845 (SASQGPPSSGAS) shows a compositional bias: low complexity. Pro residues predominate over residues 856–867 (PRTPLSPSPMKT). The span at 925–940 (QRVSNMDSTKAISVSR) shows a compositional bias: polar residues. Residues 941 to 951 (RSSEEMKRDMA) are compositionally biased toward basic and acidic residues. Residues 972–981 (ALASSSPTAS) show a composition bias toward low complexity. Positions 1007–1112 (GSKRNALLKW…YVTAIYKYFE (106 aa)) constitute a Calponin-homology (CH) domain.

It belongs to the cytospin-A family. As to quaternary structure, may interact with both microtubules and actin cytoskeleton.

The protein localises to the cytoplasm. Its subcellular location is the cytoskeleton. The protein resides in the spindle. It is found in the cell junction. It localises to the gap junction. Involved in cytokinesis and spindle organization. May play a role in actin cytoskeleton organization and microtubule stabilization and hence required for proper cell adhesion and migration. The sequence is that of Cytospin-A (specc1l) from Tetraodon nigroviridis (Spotted green pufferfish).